A 162-amino-acid polypeptide reads, in one-letter code: Peptide methionine sulfoxide reductase MsrA (162 aa).

Residue cysteine 16 is part of the active site.

It belongs to the MsrA Met sulfoxide reductase family.

It carries out the reaction L-methionyl-[protein] + [thioredoxin]-disulfide + H2O = L-methionyl-(S)-S-oxide-[protein] + [thioredoxin]-dithiol. The catalysed reaction is [thioredoxin]-disulfide + L-methionine + H2O = L-methionine (S)-S-oxide + [thioredoxin]-dithiol. Has an important function as a repair enzyme for proteins that have been inactivated by oxidation. Catalyzes the reversible oxidation-reduction of methionine sulfoxide in proteins to methionine. This chain is Peptide methionine sulfoxide reductase MsrA, found in Geobacter metallireducens (strain ATCC 53774 / DSM 7210 / GS-15).